The chain runs to 75 residues: Putative defensin-like protein 126 (75 aa).

The N-terminal stretch at 1–24 (MSKSTFLFVYIILILGSMVNEIQG) is a signal peptide. Cystine bridges form between Cys29–Cys73, Cys38–Cys57, Cys43–Cys67, and Cys47–Cys69.

The protein belongs to the DEFL family.

It localises to the secreted. In Arabidopsis thaliana (Mouse-ear cress), this protein is Putative defensin-like protein 126 (LCR6).